Consider the following 726-residue polypeptide: Catalase-peroxidase (726 aa).

The segment at residues 90–213 is a cross-link (tryptophyl-tyrosyl-methioninium (Trp-Tyr) (with M-239)); the sequence is WHAAGTYRIG…LAAVQMGLIY (124 aa). The Proton acceptor role is filled by His91. The tryptophyl-tyrosyl-methioninium (Tyr-Met) (with W-90) cross-link spans 213 to 239; the sequence is YVNPEGPNGNPDPLAAARDIRETFARM. His254 is a heme b binding site. The interval 334 to 359 is disordered; sequence AHQWKPKHGAGANTVPDAHDPSKRHA.

The protein belongs to the peroxidase family. Peroxidase/catalase subfamily. As to quaternary structure, homodimer or homotetramer. Requires heme b as cofactor. Post-translationally, formation of the three residue Trp-Tyr-Met cross-link is important for the catalase, but not the peroxidase activity of the enzyme.

The catalysed reaction is H2O2 + AH2 = A + 2 H2O. It carries out the reaction 2 H2O2 = O2 + 2 H2O. In terms of biological role, bifunctional enzyme with both catalase and broad-spectrum peroxidase activity. The chain is Catalase-peroxidase from Bradyrhizobium sp. (strain BTAi1 / ATCC BAA-1182).